The following is a 447-amino-acid chain: Enolase (447 aa).

(2R)-2-phosphoglycerate is bound at residue Gln-168. The active-site Proton donor is the Glu-210. Residues Asp-247, Glu-292, and Asp-319 each contribute to the Mg(2+) site. Positions 344, 373, 374, and 395 each coordinate (2R)-2-phosphoglycerate. Lys-344 serves as the catalytic Proton acceptor.

Belongs to the enolase family. As to quaternary structure, component of the RNA degradosome, a multiprotein complex involved in RNA processing and mRNA degradation. It depends on Mg(2+) as a cofactor.

The protein localises to the cytoplasm. The protein resides in the secreted. It localises to the cell surface. The catalysed reaction is (2R)-2-phosphoglycerate = phosphoenolpyruvate + H2O. It participates in carbohydrate degradation; glycolysis; pyruvate from D-glyceraldehyde 3-phosphate: step 4/5. In terms of biological role, catalyzes the reversible conversion of 2-phosphoglycerate (2-PG) into phosphoenolpyruvate (PEP). It is essential for the degradation of carbohydrates via glycolysis. This is Enolase from Blochmanniella floridana.